A 453-amino-acid polypeptide reads, in one-letter code: MDSANLHQLQDQLQLVGSSSSSSSLDNNSDPSCYGASSAHQWSPGGISLNSVSLSHNYNNEMLNTRAHNNNNNNNTSECMSLSSIHNHSLIQQQDFPLQWPHDQSSYQHHEGLLKIKEELSSSTISDHQEGISKFTDMLNSPVITNYLKINEHKDYTEKLLLKSMSSGFPINGDYGSSLPSSSSSSSPSSQSHRGNFSQIYPSVNISSLSESRKMSMDDMSNISRPFDINMQVFDGRLFEGNVLVPPFNAQEISSLGMSRGSLPSFGLPFHHHLQQTLPHLSSSPTHQMEMFSNEPQTSEGKRHNFLMATKAGENASKKPRVESRSSCPPFKVRKEKLGDRIAALQQLVSPFGKTDTASVLMEAIGYIKFLQSQIETLSVPYMRASRNRPGKASQLVSQSQEGDEEETRDLRSRGLCLVPLSCMTYVTGDGGDGGGGVGTGFWPTPPGFGGGT.

2 disordered regions span residues 1 to 37 (MDSA…YGAS) and 177 to 197 (SSLP…RGNF). Composition is skewed to low complexity over residues 8 to 32 (QLQD…SDPS) and 177 to 192 (SSLP…SSQS). Residues 322-371 (VESRSSCPPFKVRKEKLGDRIAALQQLVSPFGKTDTASVLMEAIGYIKFL) enclose the bHLH domain. A disordered region spans residues 386–411 (SRNRPGKASQLVSQSQEGDEEETRDL).

Homodimer.

The protein resides in the nucleus. This Arabidopsis thaliana (Mouse-ear cress) protein is Transcription factor bHLH110 (BHLH110).